The primary structure comprises 328 residues: Probable G-protein coupled receptor 82 (328 aa).

Residues 1-11 lie on the Extracellular side of the membrane; sequence MTNNSTCIQPS. 2 N-linked (GlcNAc...) asparagine glycosylation sites follow: N3 and N4. A helical membrane pass occupies residues 12–32; that stretch reads VISTTALPVTYIFLFIIGLFG. The Cytoplasmic portion of the chain corresponds to 33-55; the sequence is NSLAQWVFLTKIGKKTSTHIYLA. A helical transmembrane segment spans residues 56-76; that stretch reads NLVTANLLVCTAMPFMGIYFL. Over 77–92 the chain is Extracellular; sequence RGFYWKYQSVQCRLVN. Residues 93-115 traverse the membrane as a helical segment; the sequence is FLGTLSMHVSMFVSLLILSWIAI. Residues 116–156 are Cytoplasmic-facing; that stretch reads SRYATLMKKESKQEATSCYERMFYGHVLKRFRQPNFARTMC. A helical membrane pass occupies residues 157–177; that stretch reads IYIWGVVLVIIIPVTLYYSVV. At 178-197 the chain is on the extracellular side; sequence EATEEGQSQCYNRQMELGAR. Residues 198–218 form a helical membrane-spanning segment; the sequence is PSQIAGLIGTTFIGFSFLVVV. Over 219–251 the chain is Cytoplasmic; it reads TSYYSLVSHLRRVRTCTSITEKDLTYRSVKRHL. A helical transmembrane segment spans residues 252–272; it reads LIIQVLLVVCFLPYSIFKPIF. Over 273-328 the chain is Extracellular; the sequence is YVLHQREGDCQQLNYLIEAKNILTCLASARSSTDPIIFLLLDKTFKKTLYGLLTKS.

This sequence belongs to the G-protein coupled receptor 1 family.

Its subcellular location is the cell membrane. Its function is as follows. Orphan receptor. This chain is Probable G-protein coupled receptor 82 (Gpr82), found in Mus musculus (Mouse).